The sequence spans 1504 residues: DNA polymerase zeta catalytic subunit (1504 aa).

Positions 1398, 1401, 1414, and 1417 each coordinate Zn(2+). Residues 1398–1417 form a CysA-type zinc finger; that stretch reads CCNCGEELTKICSLQLCDDC. [4Fe-4S] cluster-binding residues include cysteine 1446, cysteine 1449, cysteine 1468, and cysteine 1473. Positions 1446 to 1473 match the CysB motif motif; it reads CRTCSYRYTSDAGIENDHIASKCNSYDC.

This sequence belongs to the DNA polymerase type-B family. Forms DNA polymerase zeta with REV7. [4Fe-4S] cluster is required as a cofactor.

It is found in the mitochondrion. The protein resides in the nucleus. The enzyme catalyses DNA(n) + a 2'-deoxyribonucleoside 5'-triphosphate = DNA(n+1) + diphosphate. Functionally, nonessential DNA polymerase. Required for DNA damage induced mutagenesis. Involved in DNA repair, mitochondrial DNA repair and translesion synthesis. Translesion synthesis in S.cerevisiae may use a specialized DNA polymerase that is not required for other DNA replicative processes. Has a role in the bypass of abasic (AP) sites. Highly inefficient in incorporating nucleotides opposite the AP site, but efficiently extends from nucleotides, particularly an A, inserted opposite the lesion. The protein is DNA polymerase zeta catalytic subunit (REV3) of Saccharomyces cerevisiae (strain ATCC 204508 / S288c) (Baker's yeast).